The following is a 467-amino-acid chain: UDP-glycosyltransferase 71D2 (467 aa).

Residues serine 283, 339 to 341, 356 to 364, and 378 to 381 each bind UDP-alpha-D-glucose; these read SPQ, HCGWNSIVE, and YAEQ.

Belongs to the UDP-glycosyltransferase family.

The sequence is that of UDP-glycosyltransferase 71D2 (UGT71D2) from Arabidopsis thaliana (Mouse-ear cress).